The primary structure comprises 157 residues: Small ribosomal subunit protein uS7 (157 aa).

The protein belongs to the universal ribosomal protein uS7 family. As to quaternary structure, part of the 30S ribosomal subunit. Contacts proteins S9 and S11.

Functionally, one of the primary rRNA binding proteins, it binds directly to 16S rRNA where it nucleates assembly of the head domain of the 30S subunit. Is located at the subunit interface close to the decoding center, probably blocks exit of the E-site tRNA. The polypeptide is Small ribosomal subunit protein uS7 (Phenylobacterium zucineum (strain HLK1)).